The chain runs to 267 residues: Triosephosphate isomerase (267 aa).

Residue N12–K14 coordinates substrate. The active-site Electrophile is H104. E176 (proton acceptor) is an active-site residue. Residues G182, S222, and G243–G244 contribute to the substrate site.

It belongs to the triosephosphate isomerase family. In terms of assembly, homodimer.

It is found in the cytoplasm. The enzyme catalyses D-glyceraldehyde 3-phosphate = dihydroxyacetone phosphate. It functions in the pathway carbohydrate biosynthesis; gluconeogenesis. It participates in carbohydrate degradation; glycolysis; D-glyceraldehyde 3-phosphate from glycerone phosphate: step 1/1. In terms of biological role, involved in the gluconeogenesis. Catalyzes stereospecifically the conversion of dihydroxyacetone phosphate (DHAP) to D-glyceraldehyde-3-phosphate (G3P). The protein is Triosephosphate isomerase of Bifidobacterium longum (strain DJO10A).